We begin with the raw amino-acid sequence, 170 residues long: NADPH-dependent 7-cyano-7-deazaguanine reductase (170 aa).

The Thioimide intermediate role is filled by Cys-58. The Proton donor role is filled by Asp-65. Substrate contacts are provided by residues 80 to 82 (VES) and 99 to 100 (HE).

It belongs to the GTP cyclohydrolase I family. QueF type 1 subfamily.

It localises to the cytoplasm. The catalysed reaction is 7-aminomethyl-7-carbaguanine + 2 NADP(+) = 7-cyano-7-deazaguanine + 2 NADPH + 3 H(+). It functions in the pathway tRNA modification; tRNA-queuosine biosynthesis. In terms of biological role, catalyzes the NADPH-dependent reduction of 7-cyano-7-deazaguanine (preQ0) to 7-aminomethyl-7-deazaguanine (preQ1). The protein is NADPH-dependent 7-cyano-7-deazaguanine reductase of Bdellovibrio bacteriovorus (strain ATCC 15356 / DSM 50701 / NCIMB 9529 / HD100).